The following is an 823-amino-acid chain: NAD-dependent histone deacetylase sirtuin-1 (823 aa).

Positions 41–67 (LASTSTEAEAEAEATATTTEPATSELA) are enriched in low complexity. The segment at 41 to 146 (LASTSTEAEA…SSSNCSSSVE (106 aa)) is disordered. Residues 72–95 (GEIKTKTLAAREEQEIGANLEHKT) are compositionally biased toward basic and acidic residues. Acidic residues predominate over residues 104 to 137 (EDEDDEEEEEEDDEEEEEDDEEGITGTSNEDEDS). Residues 204 to 499 (KLASVNTFDD…LCCDESVLTE (296 aa)) enclose the Deacetylase sirtuin-type domain. NAD(+)-binding positions include 229–248 (GAGVSVSCGIPDFRSTNGIY) and 313–316 (QNID). Catalysis depends on His-331, which acts as the Proton acceptor. Residues Cys-339, Cys-342, Cys-363, and Cys-366 each coordinate Zn(2+). NAD(+)-binding positions include 427-429 (GSS), 452-454 (NRE), and Ser-469. Phosphoserine is present on residues Ser-618 and Ser-621. Over residues 698 to 707 (DYSDDDDEEE) the composition is skewed to acidic residues. Disordered regions lie at residues 698 to 722 (DYSDDDDEEEERSHNRHSDLFGNVG) and 777 to 823 (IIEQ…LAAV). The segment covering 798 to 813 (PSEENKQQTQIERSEE) has biased composition (basic and acidic residues). Residues 814–823 (SPPPGQLAAV) show a composition bias toward pro residues.

The protein belongs to the sirtuin family. Class I subfamily. Interacts with the transcriptional repressors hairy (hry) and deadpan (dpn); via basic domains. Associates with the Esc/E(z) histone methyltransferase complex. Interacts directly with E(z) and HDAC1/Rpd3. Requires Zn(2+) as cofactor.

The protein localises to the cytoplasm. The protein resides in the nucleus. It localises to the chromosome. It carries out the reaction N(6)-acetyl-L-lysyl-[protein] + NAD(+) + H2O = 2''-O-acetyl-ADP-D-ribose + nicotinamide + L-lysyl-[protein]. In terms of biological role, NAD-dependent histone deacetylase involved in heterochromatic silencing. Mildly suppresses the heterochromatin-mediated silencing phenomenon known as position-effect variegation (PEV). Required for epigenetic silencing of the polycomb group proteins. Has histone H4 deacetylase activity in vitro. Required maternally for establishing proper segmentation of the embryo. Involved in sex determination. May be involved in the regulation of life span. This chain is NAD-dependent histone deacetylase sirtuin-1, found in Drosophila melanogaster (Fruit fly).